Consider the following 608-residue polypeptide: MGQAHITKHIFVTGGVASSLGKGLTASSLGRLLKARGLRVTMQKLDPYLNVDPGTMNPFQHGEVFVTDDGAETDLDIGHYERFLDVSLDGSANVTTGQVYSAVIARERRGGYLGQTVQVVPHITDEIKDRIRRLADDSVDVVITEVGGTVGDIESLPYLEAIRQVRHEVGRDNALTVHVSLVPYLAPSGELKTKPTQHSVAALRSIGLQPDAVVCRSDRPLPDSLKKKIAMMCDVDDEAVVGAPDASSIYDIPRVLHREGLDAYVVRRLGLSFRDVDWTEWDTLLRRVHHPANTATIAIVGKYVDLPDAYLSVTEALRAGAFATDTRVDLRWVTSDECSSPDATATLLDGIDGVIVPGGFGVRGIEGKLTALRHARENGIPTLGICLGLQCMVIEAARSLAGLEAANSTEFVPETPHPVISTMADQHEVVAGTRDMGGTMRLGLYSCVLAPGTLAQREYGAAEVAERHRHRYEVNNDYRHRLAAAGLVFSGTSPDGRLVEVVELPADVHPYYVGTQAHPEFRSRPTRAHPLFRGLVAAAVAHADRRRGMLPVDLPSEDAPTPENGVPENGAAQTRGVTAGRSGGSIRRGASASRPSVSSNGTAALVSP.

Residues 1 to 271 form an amidoligase domain region; sequence MGQAHITKHI…DAYVVRRLGL (271 aa). Residue serine 18 participates in CTP binding. Serine 18 serves as a coordination point for UTP. Residues 19 to 24 and aspartate 76 each bind ATP; that span reads SLGKGL. Positions 76 and 145 each coordinate Mg(2+). Residues 152 to 154, 192 to 197, and lysine 228 each bind CTP; these read DIE and KTKPTQ. UTP-binding positions include 192–197 and lysine 228; that span reads KTKPTQ. A Glutamine amidotransferase type-1 domain is found at 296 to 545; it reads TIAIVGKYVD…VAAAVAHADR (250 aa). Glycine 359 contacts L-glutamine. Cysteine 386 serves as the catalytic Nucleophile; for glutamine hydrolysis. L-glutamine is bound by residues 387–390, glutamate 410, and arginine 471; that span reads LGLQ. Catalysis depends on residues histidine 518 and glutamate 520. A disordered region spans residues 550-608; the sequence is LPVDLPSEDAPTPENGVPENGAAQTRGVTAGRSGGSIRRGASASRPSVSSNGTAALVSP. A compositionally biased stretch (low complexity) spans 584–594; the sequence is GSIRRGASASR.

Belongs to the CTP synthase family. In terms of assembly, homotetramer.

It carries out the reaction UTP + L-glutamine + ATP + H2O = CTP + L-glutamate + ADP + phosphate + 2 H(+). The enzyme catalyses L-glutamine + H2O = L-glutamate + NH4(+). The catalysed reaction is UTP + NH4(+) + ATP = CTP + ADP + phosphate + 2 H(+). It functions in the pathway pyrimidine metabolism; CTP biosynthesis via de novo pathway; CTP from UDP: step 2/2. With respect to regulation, allosterically activated by GTP, when glutamine is the substrate; GTP has no effect on the reaction when ammonia is the substrate. The allosteric effector GTP functions by stabilizing the protein conformation that binds the tetrahedral intermediate(s) formed during glutamine hydrolysis. Inhibited by the product CTP, via allosteric rather than competitive inhibition. Catalyzes the ATP-dependent amination of UTP to CTP with either L-glutamine or ammonia as the source of nitrogen. Regulates intracellular CTP levels through interactions with the four ribonucleotide triphosphates. This is CTP synthase from Frankia casuarinae (strain DSM 45818 / CECT 9043 / HFP020203 / CcI3).